A 389-amino-acid polypeptide reads, in one-letter code: Succinate--CoA ligase [ADP-forming] subunit beta (389 aa).

One can recognise an ATP-grasp domain in the interval 9-244; it reads KQLFADYGLP…ETQEDPREVE (236 aa). ATP-binding positions include lysine 46, 53–55, glutamate 99, glycine 102, and glutamate 107; that span reads GRG. Positions 199 and 213 each coordinate Mg(2+). Substrate contacts are provided by residues asparagine 264 and 321 to 323; that span reads GIV.

This sequence belongs to the succinate/malate CoA ligase beta subunit family. In terms of assembly, heterotetramer of two alpha and two beta subunits. Mg(2+) is required as a cofactor.

It carries out the reaction succinate + ATP + CoA = succinyl-CoA + ADP + phosphate. The catalysed reaction is GTP + succinate + CoA = succinyl-CoA + GDP + phosphate. The protein operates within carbohydrate metabolism; tricarboxylic acid cycle; succinate from succinyl-CoA (ligase route): step 1/1. Functionally, succinyl-CoA synthetase functions in the citric acid cycle (TCA), coupling the hydrolysis of succinyl-CoA to the synthesis of either ATP or GTP and thus represents the only step of substrate-level phosphorylation in the TCA. The beta subunit provides nucleotide specificity of the enzyme and binds the substrate succinate, while the binding sites for coenzyme A and phosphate are found in the alpha subunit. This chain is Succinate--CoA ligase [ADP-forming] subunit beta, found in Tolumonas auensis (strain DSM 9187 / NBRC 110442 / TA 4).